The following is a 229-amino-acid chain: UPF0441 protein YE3666 (229 aa).

2 disordered regions span residues 101 to 125 and 190 to 229; these read PAQA…QQSG and KPAV…SMGG. 2 stretches are compositionally biased toward low complexity: residues 109 to 120 and 214 to 229; these read TSSSSSETTAAA and RSAA…SMGG.

This sequence belongs to the UPF0441 family.

This chain is UPF0441 protein YE3666, found in Yersinia enterocolitica serotype O:8 / biotype 1B (strain NCTC 13174 / 8081).